Here is a 63-residue protein sequence, read N- to C-terminus: Large ribosomal subunit protein bL28 (63 aa).

Over residues 11 to 20 (GNNSGASVSH) the composition is skewed to polar residues. Positions 11–30 (GNNSGASVSHSNKKTKRKWK) are disordered. Over residues 21–30 (SNKKTKRKWK) the composition is skewed to basic residues.

It belongs to the bacterial ribosomal protein bL28 family.

The protein is Large ribosomal subunit protein bL28 of Natranaerobius thermophilus (strain ATCC BAA-1301 / DSM 18059 / JW/NM-WN-LF).